The primary structure comprises 330 residues: Homeobox protein Hox-C13 (330 aa).

The span at Gly-30–Ser-47 shows a compositional bias: gly residues. The segment at Gly-30 to Ser-50 is disordered. Positions Gly-260–Val-319 form a DNA-binding region, homeobox.

The protein belongs to the Abd-B homeobox family.

It localises to the nucleus. Functionally, transcription factor which plays a role in hair follicle differentiation. Regulates FOXQ1 expression and that of other hair-specific genes. This is Homeobox protein Hox-C13 (HOXC13) from Homo sapiens (Human).